The primary structure comprises 499 residues: MTVATGDLTDGSVGFAGHPQDSYDPEPDHECCERVVINISGLRFETQLKTLSQFPETLLGDPKKRMRYFDPLRNEYFFDRNRPSFDAILYFYQSGGRLRRPVNVPLDIFSEEIRFYELGEEAMEIFREDEGFIKEEERPLPDNEFQKQVWLLFEYPESSGPARIIAIISVTVILISIVSFCLETLPVFRDENEDMHGSGGNYYSYPNSTVRFQKSNTFTDPFFIVETLCIIWFSFEFLVRFLACPSKAVFFTNLMNIIDIVAIIPYFITLGTELAEKTEDGQQGQQAMSLAILRVIRLVRVFRIFKLSRHSKGLQILGQTLNASMRELGLLIFFLFIGVILFSSAVFFAEADERDSQFPSIPDAFWWAVVSMTTVGYGDMVPTTIGGKIVGSLCAIAGVLTIALPVPVIVSNFNYFYHRETEGEEQAQYLQVTSCPKIPSSPDLQKSRSASTLSKSDYMEIQEGVNHSNEDFREKNLKTANCTLGNTNYVNITKMLTDV.

Residues 1–27 (MTVATGDLTDGSVGFAGHPQDSYDPEP) form a disordered region. A tetramerization domain region spans residues 1–125 (MTVATGDLTD…YELGEEAMEI (125 aa)). Topologically, residues 1–160 (MTVATGDLTD…LLFEYPESSG (160 aa)) are cytoplasmic. A helical membrane pass occupies residues 161 to 182 (PARIIAIISVTVILISIVSFCL). The Extracellular portion of the chain corresponds to 183 to 221 (ETLPVFRDENEDMHGSGGNYYSYPNSTVRFQKSNTFTDP). The N-linked (GlcNAc...) asparagine glycan is linked to Asn-207. Residues 222-243 (FFIVETLCIIWFSFEFLVRFLA) form a helical membrane-spanning segment. The S-palmitoyl cysteine moiety is linked to residue Cys-244. Over 244–254 (CPSKAVFFTNL) the chain is Cytoplasmic. Residues 255 to 275 (MNIIDIVAIIPYFITLGTELA) form a helical membrane-spanning segment. Residues 276–289 (EKTEDGQQGQQAMS) are Extracellular-facing. A helical; Voltage-sensor membrane pass occupies residues 290–310 (LAILRVIRLVRVFRIFKLSRH). The Cytoplasmic segment spans residues 311-325 (SKGLQILGQTLNASM). Residues 312–325 (KGLQILGQTLNASM) are S4-S5 linker. The chain crosses the membrane as a helical span at residues 326–347 (RELGLLIFFLFIGVILFSSAVF). Topologically, residues 348-361 (FAEADERDSQFPSI) are extracellular. The segment at residues 362–373 (PDAFWWAVVSMT) is an intramembrane region (helical). The Selectivity filter motif lies at 374–379 (TVGYGD). An intramembrane segment occupies 374–381 (TVGYGDMV). At 382–388 (PTTIGGK) the chain is on the extracellular side. A helical membrane pass occupies residues 389-417 (IVGSLCAIAGVLTIALPVPVIVSNFNYFY). At 418 to 499 (HRETEGEEQA…VNITKMLTDV (82 aa)) the chain is on the cytoplasmic side. The short motif at 497–499 (TDV) is the PDZ-binding element.

It belongs to the potassium channel family. A (Shaker) (TC 1.A.1.2) subfamily. Kv1.2/KCNA2 sub-subfamily. In terms of assembly, homotetramer and heterotetramer with other family members. Detected in tadpole brain and spinal cord.

It is found in the cell membrane. It catalyses the reaction K(+)(in) = K(+)(out). Its function is as follows. Voltage-gated potassium channel that mediates transmembrane potassium transport in excitable membranes, primarily in the brain and central nervous system. Prevents aberrant action potential firing and regulates neuronal output. Forms tetrameric potassium-selective channels through which potassium ions pass in accordance with their electrochemical gradient. The channel alternates between opened and closed conformations in response to the voltage difference across the membrane. Can form functional homotetrameric channels and heterotetrameric channels with other family members; the channels characteristics depend critically on the types of channel-forming alpha subunits that are present. Channel properties are modulated by cytoplasmic beta subunits that regulate the subcellular location of the alpha subunits. In vivo, membranes probably contain a mixture of heteromeric potassium channel complexes, making it difficult to assign currents observed in intact tissues to any particular potassium channel family member. Homotetrameric KCNA2 forms a delayed-rectifier potassium channel that opens in response to membrane depolarization, followed by slow spontaneous channel closure. Regulates neuronal excitability and plays a role as pacemaker in the regulation of neuronal action potentials. KCNA2-containing channels play a presynaptic role and prevent hyperexcitability and aberrant action potential firing. Response to toxins that are selective for KCNA2-containing potassium channels suggests that in Purkinje cells, dendritic subthreshold KCNA2-containing potassium channels prevent random spontaneous calcium spikes, suppressing dendritic hyperexcitability without hindering the generation of somatic action potentials, and thereby play an important role in motor coordination. Plays a role in the induction of long-term potentiation of neuron excitability in the CA3 layer of the hippocampus. The protein is Potassium voltage-gated channel subfamily A member 2 (kcna2) of Xenopus laevis (African clawed frog).